Reading from the N-terminus, the 371-residue chain is MQPIWAVGLMTGTVLDGNIDVALLKTDGETIAEFGAYALKPYPRWIRDLLEQAQAEARVWNFEGAEPAIFAEAEEALTRAQSAAVRELVEESGLSMADIGVVGFHGQTVLHRAPQAGRLGDTRQLGDGRLMSQLLATKVAYDFRTADIRAGGQGAPLAAVYHAALLRSADASGNTAILNLGGVGNITWWDGDDALVAFDTGPANAPINDFMKKRGLGEMDRDGALAAKGKVDEDRLAELLKHPYLIAPYPKSLDRFDFTEMMADGLNEENGAATLTAFTTSAVGKALDILPRRPKRLAVSGGGRRNPTMMHMLVERAEVELVPVEALGWRGDAVEAECFAFLAVRVLRGLPISFPSTTGVPEPMTGGELVG.

12-20 provides a ligand contact to ATP; it reads GTVLDGNID.

Belongs to the anhydro-N-acetylmuramic acid kinase family.

It carries out the reaction 1,6-anhydro-N-acetyl-beta-muramate + ATP + H2O = N-acetyl-D-muramate 6-phosphate + ADP + H(+). Its pathway is amino-sugar metabolism; 1,6-anhydro-N-acetylmuramate degradation. The protein operates within cell wall biogenesis; peptidoglycan recycling. Catalyzes the specific phosphorylation of 1,6-anhydro-N-acetylmuramic acid (anhMurNAc) with the simultaneous cleavage of the 1,6-anhydro ring, generating MurNAc-6-P. Is required for the utilization of anhMurNAc either imported from the medium or derived from its own cell wall murein, and thus plays a role in cell wall recycling. This Brucella anthropi (strain ATCC 49188 / DSM 6882 / CCUG 24695 / JCM 21032 / LMG 3331 / NBRC 15819 / NCTC 12168 / Alc 37) (Ochrobactrum anthropi) protein is Anhydro-N-acetylmuramic acid kinase.